A 79-amino-acid polypeptide reads, in one-letter code: Orally active insecticidal peptide (79 aa).

The first 19 residues, 1–19 (MRVLFIIAGLALLSVVCYT), serve as a signal peptide directing secretion. The propeptide occupies 20 to 44 (SEMKERSSFNEVLSEFFAADEPQER). 3 disulfide bridges follow: C46–C61, C53–C66, and C60–C73. The residue at position 77 (A77) is an Alanine amide.

The protein belongs to the neurotoxin 03 (Tx2) family. 01 subfamily. As to expression, expressed by the venom gland.

It is found in the secreted. Its function is as follows. Probable ion channel inhibitor. Shows insecticidal activity when injected into mealworms. In Selenotypus plumipes (Australian featherleg tarantula), this protein is Orally active insecticidal peptide.